A 72-amino-acid chain; its full sequence is Translation initiation factor IF-1 (72 aa).

The 72-residue stretch at 1 to 72 folds into the S1-like domain; sequence MAKDDVIQMQ…SRARIVFRTK (72 aa).

It belongs to the IF-1 family. In terms of assembly, component of the 30S ribosomal translation pre-initiation complex which assembles on the 30S ribosome in the order IF-2 and IF-3, IF-1 and N-formylmethionyl-tRNA(fMet); mRNA recruitment can occur at any time during PIC assembly.

It is found in the cytoplasm. In terms of biological role, one of the essential components for the initiation of protein synthesis. Stabilizes the binding of IF-2 and IF-3 on the 30S subunit to which N-formylmethionyl-tRNA(fMet) subsequently binds. Helps modulate mRNA selection, yielding the 30S pre-initiation complex (PIC). Upon addition of the 50S ribosomal subunit IF-1, IF-2 and IF-3 are released leaving the mature 70S translation initiation complex. This chain is Translation initiation factor IF-1, found in Herminiimonas arsenicoxydans.